A 56-amino-acid polypeptide reads, in one-letter code: Defensin-1 (56 aa).

A signal peptide spans 1 to 24 (MKAIVVLLILALILCLYAMTTVEG). 3 cysteine pairs are disulfide-bonded: Cys-26–Cys-45, Cys-31–Cys-53, and Cys-35–Cys-55.

The protein localises to the secreted. In terms of biological role, antibacterial protein involved in the immune response to septic injury. When combined with 14.026 kDa and 14.059 kDa hemolymph antimicrobial peptides, it has a strong cooperative activity against the Gram-positive bacteria B.subtilis and S.aureus, and against the Gram-negative bacteria E.coli DH5-alpha and K.pneumoniae ATCC 138833. Does not show detectable antibacterial activity when present alone. Has no hemolytic activity in human erythrocytes. The sequence is that of Defensin-1 from Centruroides limpidus (Mexican scorpion).